The chain runs to 348 residues: Type IV methyl-directed restriction enzyme EcoKMcrBC (348 aa).

Functionally, modifies the specificity of McrB restriction by expanding the range of modified sequences restricted. Does not bind to DNA. The chain is Type IV methyl-directed restriction enzyme EcoKMcrBC (mcrC) from Escherichia coli (strain K12).